The following is a 343-amino-acid chain: Glyceraldehyde-3-phosphate dehydrogenase (343 aa).

NAD(+) is bound by residues 13-14 and Gly-111; that span reads TI. 140–142 contributes to the D-glyceraldehyde 3-phosphate binding site; that stretch reads SCN. Cys-141 functions as the Nucleophile in the catalytic mechanism. Arg-169 is an NAD(+) binding site. D-glyceraldehyde 3-phosphate is bound at residue 195-196; the sequence is HA. Gln-302 is a binding site for NAD(+).

This sequence belongs to the glyceraldehyde-3-phosphate dehydrogenase family. As to quaternary structure, homotetramer.

The protein localises to the cytoplasm. The enzyme catalyses D-glyceraldehyde 3-phosphate + phosphate + NADP(+) = (2R)-3-phospho-glyceroyl phosphate + NADPH + H(+). It carries out the reaction D-glyceraldehyde 3-phosphate + phosphate + NAD(+) = (2R)-3-phospho-glyceroyl phosphate + NADH + H(+). It participates in carbohydrate degradation; glycolysis; pyruvate from D-glyceraldehyde 3-phosphate: step 1/5. The chain is Glyceraldehyde-3-phosphate dehydrogenase from Hyperthermus butylicus (strain DSM 5456 / JCM 9403 / PLM1-5).